We begin with the raw amino-acid sequence, 428 residues long: Neuromedin-U receptor 1 (428 aa).

The Extracellular segment spans residues 1–59 (MTPPCLNCSIFPGALSPNASRSPLVCNISEFKWPYQPEDLNLTDEALRLKYLGPQQMKQ). N-linked (GlcNAc...) asparagine glycans are attached at residues Asn27 and Asn41. A helical transmembrane segment spans residues 60–80 (FVPICVTYLLIFVVGTLGNGL). At 81 to 96 (TCTVILRNKTMRTPTN) the chain is on the cytoplasmic side. A helical transmembrane segment spans residues 97–117 (FYLFSLAVSDMLVLLVGLPLE). Over 118 to 137 (LYEMQQNYPFQLGASACYFR) the chain is Extracellular. Cys134 and Cys219 form a disulfide bridge. A helical membrane pass occupies residues 138 to 158 (ILLLETVCLASVLNVTALSVE). Topologically, residues 159-181 (RYVAVVRPLQAKSVMTRAHVRRM) are cytoplasmic. The helical transmembrane segment at 182–202 (VGAIWVLATLFSLPNTSLHGL) threads the bilayer. The Extracellular portion of the chain corresponds to 203 to 235 (SQLTVPCRGPVPDSAICSLVGPMDFYKLVVLTT). The chain crosses the membrane as a helical span at residues 236–256 (ALLFFCLPMVTISVLYLLIGL). Over 257-294 (RLRRERMLLQVEVKGRKTAATQETSHRRIQLQDRGRRQ) the chain is Cytoplasmic. Residues 295–315 (VTKMLFALVVVFGICWAPFHA) traverse the membrane as a helical segment. The Extracellular segment spans residues 316–339 (DRIMWSLVYGHSTEGLHLAYQCVH). The helical transmembrane segment at 340–360 (IASGIFFYLGSAANPVLYSLM) threads the bilayer. Residues 361–428 (STRFRETFLQ…PGCQQETDPS (68 aa)) are Cytoplasmic-facing.

It belongs to the G-protein coupled receptor 1 family. Ubiquitously expressed.

It localises to the cell membrane. Functionally, receptor for the neuromedin-U and neuromedin-S neuropeptides. The chain is Neuromedin-U receptor 1 (Nmur1) from Mus musculus (Mouse).